A 512-amino-acid polypeptide reads, in one-letter code: Protein male-specific lethal-3 (512 aa).

Residues 11–90 (FHKGEIVLCY…QLQRELAEAA (80 aa)) form the Chromo domain. The disordered stretch occupies residues 98–175 (YSYKGTPDKP…DGRLKGNRGR (78 aa)). Over residues 149-169 (RTRDNSGGKRKEKPPSGDGRL) the composition is skewed to basic and acidic residues. Residues 196 to 500 (QEDRIMMRVS…STALPQEDLQ (305 aa)) form the MRG domain.

Component of the male-specific lethal (MSL) histone acetyltransferase complex, composed of mof, mle, msl-1, msl-2 and msl-3 proteins, as well as roX1 and roX2 non-coding RNAs. Component of a maternal MSL subcomplex composed of mof, msl-1 and msl-3. Post-translationally, ubiquitinated by msl-2.

The protein resides in the nucleus. Its subcellular location is the chromosome. Functionally, component of the male-specific lethal (MSL) histone acetyltransferase complex, a multiprotein complex essential for elevating transcription of the single X chromosome in the male (X chromosome dosage compensation). The MSL complex specifically associates with the single X chromosome in males and mediates formation of H4K16ac, promoting a two-fold activation of X chromosome. Acts as a histone reader that specifically recognizes and binds histone H3 trimethylated at 'Lys-36' (H3K36me3) and histone H4 monomethylated at 'Lys-20' (H4K20me1). Within the MSL complex, mediates the spreading of the MSL complex from initiation sites on the male X chromosome to flanking chromatin. Following initial recruitment of the MSL complex to male X chromosome by msl-2, msl-3 binds H3K36me3 and promotes spreading of the MSL complex in cis. In addition to its role in dosage compensation in males, promotes germline stem cell differentiation in females: recognizes and binds H3K36me3, promoting recruitment of the ATAC complex and transcription of genes, such as RpS19b. This is Protein male-specific lethal-3 from Drosophila melanogaster (Fruit fly).